The chain runs to 830 residues: Periplasmic nitrate reductase (830 aa).

Positions 1–31 form a signal peptide, tat-type signal; sequence MKLSRRDFMKANAAVAAAAAAGMTIPTVAKA. One can recognise a 4Fe-4S Mo/W bis-MGD-type domain in the interval 39–95; it reads IKWDKAPCRFCGTGCGVLVGTQNGRIVASQGDPDSPVNRGLNCIKGYFLPKIMYGKD. [4Fe-4S] cluster is bound by residues Cys46, Cys49, Cys53, and Cys81. Mo-bis(molybdopterin guanine dinucleotide)-binding positions include Lys83, Gln150, Asn175, Cys179, 212 to 219, 243 to 247, 262 to 264, Met372, Gln376, Asn482, 508 to 509, Lys531, Asp558, and 718 to 727; these read WGSNMAEM, STYEH, QTD, SD, and TGRVLEHWHT. A substrate-binding site is contributed by Phe794. Positions 802 and 819 each coordinate Mo-bis(molybdopterin guanine dinucleotide).

This sequence belongs to the prokaryotic molybdopterin-containing oxidoreductase family. NasA/NapA/NarB subfamily. Component of the periplasmic nitrate reductase NapAB complex composed of NapA and NapB. Requires [4Fe-4S] cluster as cofactor. It depends on Mo-bis(molybdopterin guanine dinucleotide) as a cofactor. Post-translationally, predicted to be exported by the Tat system. The position of the signal peptide cleavage has not been experimentally proven.

Its subcellular location is the periplasm. It catalyses the reaction 2 Fe(II)-[cytochrome] + nitrate + 2 H(+) = 2 Fe(III)-[cytochrome] + nitrite + H2O. In terms of biological role, catalytic subunit of the periplasmic nitrate reductase complex NapAB. Receives electrons from NapB and catalyzes the reduction of nitrate to nitrite. The protein is Periplasmic nitrate reductase of Yersinia pseudotuberculosis serotype IB (strain PB1/+).